The chain runs to 514 residues: ATP synthase subunit alpha (514 aa).

170–177 (GDRQIGKT) contacts ATP.

It belongs to the ATPase alpha/beta chains family. As to quaternary structure, F-type ATPases have 2 components, CF(1) - the catalytic core - and CF(0) - the membrane proton channel. CF(1) has five subunits: alpha(3), beta(3), gamma(1), delta(1), epsilon(1). CF(0) has three main subunits: a(1), b(2) and c(9-12). The alpha and beta chains form an alternating ring which encloses part of the gamma chain. CF(1) is attached to CF(0) by a central stalk formed by the gamma and epsilon chains, while a peripheral stalk is formed by the delta and b chains.

The protein localises to the cell inner membrane. It catalyses the reaction ATP + H2O + 4 H(+)(in) = ADP + phosphate + 5 H(+)(out). Its function is as follows. Produces ATP from ADP in the presence of a proton gradient across the membrane. The alpha chain is a regulatory subunit. The sequence is that of ATP synthase subunit alpha from Pseudomonas fluorescens (strain Pf0-1).